The primary structure comprises 514 residues: MDVKISAILLACIIQYAVSSPIQVFYSGAKILAEEDAMAKEDILKAIEKADPGSVKTQDSMDILSQILEANKGIKLQTQEGDIIQKQGRSAINDARFLWPKSADGIVPVPYNLSYSYNADQLALFKKAIQEFEALTCVRFVPWTTEVNFLNIMSNGGCGSLIGKNGGAQRLELDANGCMNMGIIQHELNHALGFYHEQNRSDRDDYVIIHTENIIPDFLKMFEKYNTNNLGIEYDYASVMHYSRYHYSINGDITIEPKPDPNVPIGQRDGLSILDISKINKLYECNVCSNLLPYSNGMMISANYPSAYPNNANCVWLIRTPSGQVTLQFQAFDIQSSSGCVSDYIKIYDGPTKAFPVLVNRACGTGLIPLQIASTNQMLVEFVSDRAVTGTGFKATYGSIQCGGAFYSSPKTFTSPNYPGNYTTNTNCTWTITAPAGFKVSLRITDFELEIGASCRYDYLNIYNSTLGAVMGPYCGPIDFHSAIVSKSNSMMITMNSDFSKQYKGFSATYTFVR.

A signal peptide spans 1–19; it reads MDVKISAILLACIIQYAVS. Positions 90 to 286 constitute a Peptidase M12A domain; that stretch reads SAINDARFLW…SKINKLYECN (197 aa). N-linked (GlcNAc...) asparagine glycosylation occurs at asparagine 112. Intrachain disulfides connect cysteine 137–cysteine 285, cysteine 158–cysteine 178, cysteine 288–cysteine 314, cysteine 340–cysteine 363, cysteine 402–cysteine 428, and cysteine 455–cysteine 475. Histidine 186 lines the Zn(2+) pocket. Residue glutamate 187 is part of the active site. The Zn(2+) site is built by histidine 190 and histidine 196. N-linked (GlcNAc...) asparagine glycosylation occurs at asparagine 199. CUB domains lie at 288–400 and 402–513; these read CSNL…YGSI and CGGA…YTFV. 3 N-linked (GlcNAc...) asparagine glycosylation sites follow: asparagine 421, asparagine 427, and asparagine 464.

Zn(2+) is required as a cofactor.

This Xenopus laevis (African clawed frog) protein is Embryonic protein UVS.2.